The chain runs to 176 residues: Ribosome maturation factor RimM (176 aa).

Residues 93-172 (EGEFFYFDVL…EILTKDAKSI (80 aa)) enclose the PRC barrel domain.

It belongs to the RimM family. In terms of assembly, binds ribosomal protein uS19.

It localises to the cytoplasm. Functionally, an accessory protein needed during the final step in the assembly of 30S ribosomal subunit, possibly for assembly of the head region. Essential for efficient processing of 16S rRNA. May be needed both before and after RbfA during the maturation of 16S rRNA. It has affinity for free ribosomal 30S subunits but not for 70S ribosomes. The sequence is that of Ribosome maturation factor RimM from Campylobacter curvus (strain 525.92).